The sequence spans 783 residues: BMP/retinoic acid-inducible neural-specific protein 2 (783 aa).

The N-terminal stretch at 1 to 33 (MRWPCSSRFRGLWPEAAPWAVLLALGVPGWVLA) is a signal peptide. Residues 85-281 (RYRIYREFAR…FVAAALSYIT (197 aa)) form the MACPF domain. N-linked (GlcNAc...) asparagine glycans are attached at residues asparagine 185, asparagine 354, asparagine 473, asparagine 579, asparagine 626, and asparagine 658.

Belongs to the BRINP family. As to expression, expressed in olfactory bulb, cerebellum and neuronal layers in hippocampus.

Its subcellular location is the secreted. Inhibits neuronal cell proliferation by negative regulation of the cell cycle transition. The polypeptide is BMP/retinoic acid-inducible neural-specific protein 2 (Brinp2) (Rattus norvegicus (Rat)).